The following is a 186-amino-acid chain: MTIDTTEVDALINAPGRCVVNSSLESLVELISHLSSCGFEQLTDIFGIDYLEREKRIEVVYLLLDLKRNRRCCVKVSVDPASEKVPTCCGVFSVANWFEREVYDMYGVVFEGHPDLRRILTDYEFEGFPMLKDFPLTGYKEVRYDLESKEVVYEKVDLSQDYRSFDSLTPWKGVGRPSDPFDGRKE.

The interval 166 to 186 (DSLTPWKGVGRPSDPFDGRKE) is disordered.

This sequence belongs to the complex I 30 kDa subunit family. In terms of assembly, NDH-1 is composed of 14 different subunits. Subunits NuoB, C, D, E, F, and G constitute the peripheral sector of the complex.

It localises to the cell inner membrane. The catalysed reaction is a quinone + NADH + 5 H(+)(in) = a quinol + NAD(+) + 4 H(+)(out). Its function is as follows. NDH-1 shuttles electrons from NADH, via FMN and iron-sulfur (Fe-S) centers, to quinones in the respiratory chain. The immediate electron acceptor for the enzyme in this species is believed to be ubiquinone. Couples the redox reaction to proton translocation (for every two electrons transferred, four hydrogen ions are translocated across the cytoplasmic membrane), and thus conserves the redox energy in a proton gradient. This is NADH-quinone oxidoreductase subunit C from Neorickettsia sennetsu (strain ATCC VR-367 / Miyayama) (Ehrlichia sennetsu).